The primary structure comprises 31 residues: Putative translational regulatory protein ArgL (31 aa).

In terms of biological role, may serve a regulatory role in expression of downstream gene argF; in an argL-argF-lacZ fusion mutation of the start codon to a stop codon in argL increases expression of beta-galactosidase. The protein is Putative translational regulatory protein ArgL of Escherichia coli (strain K12).